We begin with the raw amino-acid sequence, 374 residues long: Phosphate acyltransferase (374 aa).

It belongs to the PlsX family. As to quaternary structure, homodimer. Probably interacts with PlsY.

It is found in the cytoplasm. The enzyme catalyses a fatty acyl-[ACP] + phosphate = an acyl phosphate + holo-[ACP]. Its pathway is lipid metabolism; phospholipid metabolism. Its function is as follows. Catalyzes the reversible formation of acyl-phosphate (acyl-PO(4)) from acyl-[acyl-carrier-protein] (acyl-ACP). This enzyme utilizes acyl-ACP as fatty acyl donor, but not acyl-CoA. This Gluconacetobacter diazotrophicus (strain ATCC 49037 / DSM 5601 / CCUG 37298 / CIP 103539 / LMG 7603 / PAl5) protein is Phosphate acyltransferase.